The chain runs to 91 residues: Anther-specific protein RTS (91 aa).

The signal sequence occupies residues 1–21; it reads MVRVGAAAAVLVLAAAAAAMA.

Functionally, required for tapetum and pollen development. This Oryza sativa subsp. japonica (Rice) protein is Anther-specific protein RTS.